The chain runs to 513 residues: ATP synthase subunit alpha (513 aa).

169-176 (GDRQTGKT) provides a ligand contact to ATP.

It belongs to the ATPase alpha/beta chains family. As to quaternary structure, F-type ATPases have 2 components, CF(1) - the catalytic core - and CF(0) - the membrane proton channel. CF(1) has five subunits: alpha(3), beta(3), gamma(1), delta(1), epsilon(1). CF(0) has three main subunits: a(1), b(2) and c(9-12). The alpha and beta chains form an alternating ring which encloses part of the gamma chain. CF(1) is attached to CF(0) by a central stalk formed by the gamma and epsilon chains, while a peripheral stalk is formed by the delta and b chains.

It localises to the cell inner membrane. It carries out the reaction ATP + H2O + 4 H(+)(in) = ADP + phosphate + 5 H(+)(out). In terms of biological role, produces ATP from ADP in the presence of a proton gradient across the membrane. The alpha chain is a regulatory subunit. This chain is ATP synthase subunit alpha, found in Thioalkalivibrio sulfidiphilus (strain HL-EbGR7).